Here is a 315-residue protein sequence, read N- to C-terminus: 4-carboxy-2-hydroxymuconate-6-semialdehyde dehydrogenase (315 aa).

This sequence belongs to the Gfo/Idh/MocA family. Homodimer.

It catalyses the reaction 4-carboxy-2-hydroxymuconate semialdehyde hemiacetal + NADP(+) = 2-oxo-2H-pyran-4,6-dicarboxylate + NADPH + H(+). The protein operates within secondary metabolite metabolism; lignin degradation. With respect to regulation, inhibited by p-chloromercuribenzoate (10 mM), HgCl2 (10 mM), or 5,5-dithiobis(2-nitrobenzoate) (100 mM). Functionally, involved in the degradation of protocatechuate (PCA) via the PCA 4,5-cleavage pathway. Catalyzes the oxidation of the hemiacetal form of 4-carboxy-2-hydroxymuconate-6-semialdehyde (CHMS) to produce 2-pyrone-4,6-dicarboxylate (PDC). LigC has 10-times-higher affinity to NADP than to NAD. This chain is 4-carboxy-2-hydroxymuconate-6-semialdehyde dehydrogenase (ligC), found in Sphingobium sp. (strain NBRC 103272 / SYK-6).